Here is a 167-residue protein sequence, read N- to C-terminus: U-scoloptoxin(08)-Er5a (167 aa).

Residues 1–22 (MKTNCEFPLLCLLIVLVANVEG) form the signal peptide. Positions 23 to 94 (EVEDTGLKMV…KRLWRNWERR (72 aa)) are excised as a propeptide. RLWRNWE repeat units follow at residues 34 to 40 (RLWRNWE), 61 to 67 (RLWRNWE), and 86 to 92 (RLWRNWE). Q95 carries the pyrrolidone carboxylic acid modification. Residues 107 to 113 (ELWRNWE) form an RLWRNWE 4; approximate repeat. A propeptide spanning residues 112 to 118 (WEDLKRR) is cleaved from the precursor. Position 119 is a pyrrolidone carboxylic acid (Q119). The stretch at 134 to 140 (RLWRNWE) is one RLWRNWE 5 repeat. Positions 139 to 167 (WEDNHATLRKRSADSLSRQKRLGKERGKE) are excised as a propeptide. A disordered region spans residues 147-167 (RKRSADSLSRQKRLGKERGKE).

The protein belongs to the scoloptoxin-08 family. As to expression, expressed by the venom gland.

It localises to the secreted. This chain is U-scoloptoxin(08)-Er5a, found in Ethmostigmus rubripes (Giant centipede).